Here is a 177-residue protein sequence, read N- to C-terminus: Ribosome maturation factor RimM (177 aa).

The region spanning 98-171 (GETIFLSEIK…AVVMDLPEGL (74 aa)) is the PRC barrel domain.

This sequence belongs to the RimM family. As to quaternary structure, binds ribosomal protein uS19.

Its subcellular location is the cytoplasm. Functionally, an accessory protein needed during the final step in the assembly of 30S ribosomal subunit, possibly for assembly of the head region. Essential for efficient processing of 16S rRNA. May be needed both before and after RbfA during the maturation of 16S rRNA. It has affinity for free ribosomal 30S subunits but not for 70S ribosomes. The protein is Ribosome maturation factor RimM of Bdellovibrio bacteriovorus (strain ATCC 15356 / DSM 50701 / NCIMB 9529 / HD100).